Here is a 448-residue protein sequence, read N- to C-terminus: Glutamyl-tRNA(Gln) amidotransferase subunit D (448 aa).

In terms of domain architecture, Asparaginase/glutaminase spans 92 to 423 (SEVKIISTGG…DKIRSLMLTN (332 aa)). Residues threonine 102, threonine 178, aspartate 179, and lysine 257 contribute to the active site.

The protein belongs to the asparaginase 1 family. GatD subfamily. As to quaternary structure, heterodimer of GatD and GatE.

The catalysed reaction is L-glutamyl-tRNA(Gln) + L-glutamine + ATP + H2O = L-glutaminyl-tRNA(Gln) + L-glutamate + ADP + phosphate + H(+). Functionally, allows the formation of correctly charged Gln-tRNA(Gln) through the transamidation of misacylated Glu-tRNA(Gln) in organisms which lack glutaminyl-tRNA synthetase. The reaction takes place in the presence of glutamine and ATP through an activated gamma-phospho-Glu-tRNA(Gln). The GatDE system is specific for glutamate and does not act on aspartate. The sequence is that of Glutamyl-tRNA(Gln) amidotransferase subunit D from Sulfurisphaera tokodaii (strain DSM 16993 / JCM 10545 / NBRC 100140 / 7) (Sulfolobus tokodaii).